We begin with the raw amino-acid sequence, 504 residues long: ATP synthase subunit alpha (504 aa).

An ATP-binding site is contributed by 171-178; sequence GDRATGKT.

This sequence belongs to the ATPase alpha/beta chains family. As to quaternary structure, F-type ATPases have 2 components, CF(1) - the catalytic core - and CF(0) - the membrane proton channel. CF(1) has five subunits: alpha(3), beta(3), gamma(1), delta(1), epsilon(1). CF(0) has three main subunits: a(1), b(2) and c(9-12). The alpha and beta chains form an alternating ring which encloses part of the gamma chain. CF(1) is attached to CF(0) by a central stalk formed by the gamma and epsilon chains, while a peripheral stalk is formed by the delta and b chains.

It localises to the cell inner membrane. It catalyses the reaction ATP + H2O + 4 H(+)(in) = ADP + phosphate + 5 H(+)(out). In terms of biological role, produces ATP from ADP in the presence of a proton gradient across the membrane. The alpha chain is a regulatory subunit. The polypeptide is ATP synthase subunit alpha (Sulfurihydrogenibium sp. (strain YO3AOP1)).